Here is a 256-residue protein sequence, read N- to C-terminus: 2,3,4,5-tetrahydropyridine-2,6-dicarboxylate N-acetyltransferase (256 aa).

It belongs to the transferase hexapeptide repeat family. DapH subfamily.

It carries out the reaction (S)-2,3,4,5-tetrahydrodipicolinate + acetyl-CoA + H2O = L-2-acetamido-6-oxoheptanedioate + CoA. The protein operates within amino-acid biosynthesis; L-lysine biosynthesis via DAP pathway; LL-2,6-diaminopimelate from (S)-tetrahydrodipicolinate (acetylase route): step 1/3. Functionally, catalyzes the transfer of an acetyl group from acetyl-CoA to tetrahydrodipicolinate. This chain is 2,3,4,5-tetrahydropyridine-2,6-dicarboxylate N-acetyltransferase, found in Lactococcus lactis subsp. cremoris (strain MG1363).